We begin with the raw amino-acid sequence, 307 residues long: UAP56-interacting factor (307 aa).

The span at 1-25 shows a compositional bias: low complexity; it reads MSGFGAAALLSGSSAAAGTRSGSSD. Disordered regions lie at residues 1 to 28 and 41 to 85; these read MSGF…DSLE and NKKE…KNHL. The short motif at 26–44 is the UAP56-binding motif element; sequence SLEKIDMSLDDIIKLNKKE. The segment covering 57–78 has biased composition (polar residues); sequence LQQNRTQQFRTPGSKWGIQQQK.

This sequence belongs to the UIF family. As to expression, widely expressed.

The protein resides in the nucleus. Its subcellular location is the nucleoplasm. The protein localises to the nucleus speckle. Its function is as follows. Required for mRNA export from the nucleus to the cytoplasm. Acts as an adapter that uses the DDX39B/UAP56-NFX1 pathway to ensure efficient mRNA export and delivering to the nuclear pore. The polypeptide is UAP56-interacting factor (FYTTD1) (Gallus gallus (Chicken)).